The following is an 85-amino-acid chain: Large ribosomal subunit protein bL27 (85 aa).

The tract at residues 1–21 (MAHKKGVGSSRNGRDSDGQRL) is disordered.

This sequence belongs to the bacterial ribosomal protein bL27 family.

In Citrifermentans bemidjiense (strain ATCC BAA-1014 / DSM 16622 / JCM 12645 / Bem) (Geobacter bemidjiensis), this protein is Large ribosomal subunit protein bL27.